We begin with the raw amino-acid sequence, 156 residues long: 6,7-dimethyl-8-ribityllumazine synthase (156 aa).

Residues F23, 57 to 59 (AYE), and 81 to 83 (AII) contribute to the 5-amino-6-(D-ribitylamino)uracil site. 86–87 (GT) serves as a coordination point for (2S)-2-hydroxy-3-oxobutyl phosphate. The Proton donor role is filled by H89. Residue F114 coordinates 5-amino-6-(D-ribitylamino)uracil. R128 contacts (2S)-2-hydroxy-3-oxobutyl phosphate.

Belongs to the DMRL synthase family.

The catalysed reaction is (2S)-2-hydroxy-3-oxobutyl phosphate + 5-amino-6-(D-ribitylamino)uracil = 6,7-dimethyl-8-(1-D-ribityl)lumazine + phosphate + 2 H2O + H(+). Its pathway is cofactor biosynthesis; riboflavin biosynthesis; riboflavin from 2-hydroxy-3-oxobutyl phosphate and 5-amino-6-(D-ribitylamino)uracil: step 1/2. Catalyzes the formation of 6,7-dimethyl-8-ribityllumazine by condensation of 5-amino-6-(D-ribitylamino)uracil with 3,4-dihydroxy-2-butanone 4-phosphate. This is the penultimate step in the biosynthesis of riboflavin. This chain is 6,7-dimethyl-8-ribityllumazine synthase, found in Helicobacter pylori (strain G27).